Here is a 222-residue protein sequence, read N- to C-terminus: MASTALSTASNPTQLCRTRASSLCKPVKGLGFGRERIPRNITCMAGSISADRVPDMSKRELMNLLLLGAISLPTFGMLVPYGSFLVPAGSGSNAGGVAAKDKLGNDILVEDWLKTHGPNDRTLAQGLKGDPTYLVVESDKTLATYGINAVCTHLGCVVPWNAAENKFLCPCHGSQYNNQGKVVRGPAPLSLALVHADVDDGKVVFVPWVETDFRTGDNPWWK.

The N-terminal 49 residues, 1-49 (MASTALSTASNPTQLCRTRASSLCKPVKGLGFGRERIPRNITCMAGSIS), are a transit peptide targeting the chloroplast. A helical membrane pass occupies residues 66 to 86 (LLGAISLPTFGMLVPYGSFLV). Positions 109–205 (VEDWLKTHGP…ADVDDGKVVF (97 aa)) constitute a Rieske domain. The [2Fe-2S] cluster site is built by Cys151, His153, Cys169, and His172. Cys156 and Cys171 are disulfide-bonded.

It belongs to the Rieske iron-sulfur protein family. As to quaternary structure, the 4 large subunits of the cytochrome b6-f complex are cytochrome b6, subunit IV (17 kDa polypeptide, petD), cytochrome f and the Rieske protein, while the 4 small subunits are petG, petL, petM and petN. The complex functions as a dimer. [2Fe-2S] cluster serves as cofactor.

It is found in the plastid. It localises to the chloroplast thylakoid membrane. The enzyme catalyses 2 oxidized [plastocyanin] + a plastoquinol + 2 H(+)(in) = 2 reduced [plastocyanin] + a plastoquinone + 4 H(+)(out). In terms of biological role, component of the cytochrome b6-f complex, which mediates electron transfer between photosystem II (PSII) and photosystem I (PSI), cyclic electron flow around PSI, and state transitions. In Triticum aestivum (Wheat), this protein is Cytochrome b6-f complex iron-sulfur subunit, chloroplastic (petC).